Reading from the N-terminus, the 220-residue chain is Fructose-6-phosphate aldolase (220 aa).

The active-site Schiff-base intermediate with substrate is Lys85.

This sequence belongs to the transaldolase family. Type 3A subfamily. As to quaternary structure, homodecamer.

It localises to the cytoplasm. It catalyses the reaction beta-D-fructose 6-phosphate = dihydroxyacetone + D-glyceraldehyde 3-phosphate. Functionally, catalyzes the reversible formation of fructose 6-phosphate from dihydroxyacetone and D-glyceraldehyde 3-phosphate via an aldolization reaction. This chain is Fructose-6-phosphate aldolase, found in Salmonella gallinarum (strain 287/91 / NCTC 13346).